We begin with the raw amino-acid sequence, 275 residues long: Rhamnulose-1-phosphate aldolase (275 aa).

Residue Glu117 is part of the active site. 3 residues coordinate Zn(2+): His141, His143, and His212.

The protein belongs to the aldolase class II family. RhaD subfamily. As to quaternary structure, homotetramer. Requires Zn(2+) as cofactor.

Its subcellular location is the cytoplasm. The catalysed reaction is L-rhamnulose 1-phosphate = (S)-lactaldehyde + dihydroxyacetone phosphate. It functions in the pathway carbohydrate degradation; L-rhamnose degradation; glycerone phosphate from L-rhamnose: step 3/3. Its function is as follows. Catalyzes the reversible cleavage of L-rhamnulose-1-phosphate to dihydroxyacetone phosphate (DHAP) and L-lactaldehyde. The sequence is that of Rhamnulose-1-phosphate aldolase from Salmonella heidelberg (strain SL476).